The sequence spans 957 residues: Glycine dehydrogenase (decarboxylating) (957 aa).

Position 708 is an N6-(pyridoxal phosphate)lysine (lysine 708).

Belongs to the GcvP family. In terms of assembly, the glycine cleavage system is composed of four proteins: P, T, L and H. It depends on pyridoxal 5'-phosphate as a cofactor.

The enzyme catalyses N(6)-[(R)-lipoyl]-L-lysyl-[glycine-cleavage complex H protein] + glycine + H(+) = N(6)-[(R)-S(8)-aminomethyldihydrolipoyl]-L-lysyl-[glycine-cleavage complex H protein] + CO2. The glycine cleavage system catalyzes the degradation of glycine. The P protein binds the alpha-amino group of glycine through its pyridoxal phosphate cofactor; CO(2) is released and the remaining methylamine moiety is then transferred to the lipoamide cofactor of the H protein. The chain is Glycine dehydrogenase (decarboxylating) from Escherichia fergusonii (strain ATCC 35469 / DSM 13698 / CCUG 18766 / IAM 14443 / JCM 21226 / LMG 7866 / NBRC 102419 / NCTC 12128 / CDC 0568-73).